Consider the following 219-residue polypeptide: 7-cyano-7-deazaguanine synthase (219 aa).

Residue 11–21 participates in ATP binding; it reads FSGGQDSTTCL. Zn(2+) contacts are provided by C188, C196, C199, and C202.

The protein belongs to the QueC family. Requires Zn(2+) as cofactor.

It catalyses the reaction 7-carboxy-7-deazaguanine + NH4(+) + ATP = 7-cyano-7-deazaguanine + ADP + phosphate + H2O + H(+). It participates in purine metabolism; 7-cyano-7-deazaguanine biosynthesis. Catalyzes the ATP-dependent conversion of 7-carboxy-7-deazaguanine (CDG) to 7-cyano-7-deazaguanine (preQ(0)). The chain is 7-cyano-7-deazaguanine synthase from Glaesserella parasuis serovar 5 (strain SH0165) (Haemophilus parasuis).